The sequence spans 134 residues: Phosphoribosyl-AMP cyclohydrolase (134 aa).

Residue D78 coordinates Mg(2+). C79 lines the Zn(2+) pocket. Mg(2+) is bound by residues D80 and D82. Residues C96 and C103 each contribute to the Zn(2+) site.

The protein belongs to the PRA-CH family. Homodimer. Requires Mg(2+) as cofactor. Zn(2+) is required as a cofactor.

Its subcellular location is the cytoplasm. It catalyses the reaction 1-(5-phospho-beta-D-ribosyl)-5'-AMP + H2O = 1-(5-phospho-beta-D-ribosyl)-5-[(5-phospho-beta-D-ribosylamino)methylideneamino]imidazole-4-carboxamide. It participates in amino-acid biosynthesis; L-histidine biosynthesis; L-histidine from 5-phospho-alpha-D-ribose 1-diphosphate: step 3/9. Functionally, catalyzes the hydrolysis of the adenine ring of phosphoribosyl-AMP. The polypeptide is Phosphoribosyl-AMP cyclohydrolase (Cupriavidus necator (strain ATCC 17699 / DSM 428 / KCTC 22496 / NCIMB 10442 / H16 / Stanier 337) (Ralstonia eutropha)).